Here is a 503-residue protein sequence, read N- to C-terminus: Maturase K (503 aa).

The protein belongs to the intron maturase 2 family. MatK subfamily.

It localises to the plastid. The protein resides in the chloroplast. In terms of biological role, usually encoded in the trnK tRNA gene intron. Probably assists in splicing its own and other chloroplast group II introns. The chain is Maturase K from Lathyrus vestitus (Pacific pea).